Reading from the N-terminus, the 152-residue chain is UPF0266 membrane protein PM0830 (152 aa).

The next 3 helical transmembrane spans lie at 1–21 (MMII…YAFY), 45–65 (KDAL…YTNL), and 66–86 (SSAT…AAFI).

Belongs to the UPF0266 family.

The protein localises to the cell inner membrane. This Pasteurella multocida (strain Pm70) protein is UPF0266 membrane protein PM0830.